The sequence spans 502 residues: Lysine--tRNA ligase (502 aa).

Mg(2+) is bound by residues E413 and E420.

Belongs to the class-II aminoacyl-tRNA synthetase family. As to quaternary structure, homodimer. Mg(2+) serves as cofactor.

The protein localises to the cytoplasm. It carries out the reaction tRNA(Lys) + L-lysine + ATP = L-lysyl-tRNA(Lys) + AMP + diphosphate. The protein is Lysine--tRNA ligase (lysS) of Haemophilus influenzae (strain ATCC 51907 / DSM 11121 / KW20 / Rd).